Reading from the N-terminus, the 1022-residue chain is Leucine--tRNA ligase (1022 aa).

Positions 47–57 (PYPNSPMHLGH) match the 'HIGH' region motif. Residues 697 to 701 (KMSKS) carry the 'KMSKS' region motif. Residue Lys-700 participates in ATP binding.

It belongs to the class-I aminoacyl-tRNA synthetase family.

The protein localises to the cytoplasm. The catalysed reaction is tRNA(Leu) + L-leucine + ATP = L-leucyl-tRNA(Leu) + AMP + diphosphate. This Ignicoccus hospitalis (strain KIN4/I / DSM 18386 / JCM 14125) protein is Leucine--tRNA ligase.